The following is a 245-amino-acid chain: Heavy metal-associated isoprenylated plant protein 1 (245 aa).

The HMA 1 domain occupies 28–92 (PVHVVLKIDF…KLQKKSKKKV (65 aa)). Positions 39 and 42 each coordinate a metal cation. The disordered stretch occupies residues 91 to 113 (KVELISPKPKKDTKENNEKKAND). The segment covering 99 to 113 (PKKDTKENNEKKAND) has biased composition (basic and acidic residues). The 68-residue stretch at 121–188 (VTTVVLKVNC…KLKKTVQVVP (68 aa)) folds into the HMA 2 domain. Residues C132 and C135 each coordinate a metal cation. The residue at position 242 (C242) is a Cysteine methyl ester. A lipid anchor (S-farnesyl cysteine) is attached at C242. The propeptide at 243–245 (SVM) is removed in mature form.

This sequence belongs to the HIPP family.

In terms of biological role, heavy-metal-binding protein. This Arabidopsis thaliana (Mouse-ear cress) protein is Heavy metal-associated isoprenylated plant protein 1.